Reading from the N-terminus, the 146-residue chain is Large ribosomal subunit protein uL15 (146 aa).

A compositionally biased stretch (basic and acidic residues) spans 1–13 (MKLHELKPAEGSR). A disordered region spans residues 1–56 (MKLHELKPAEGSRKVRNRVGRGAATGNGKTSGRGQKGQKARSGGSVRPGFEGGQLP). Gly residues predominate over residues 23–35 (AATGNGKTSGRGQ).

Belongs to the universal ribosomal protein uL15 family. Part of the 50S ribosomal subunit.

In terms of biological role, binds to the 23S rRNA. The sequence is that of Large ribosomal subunit protein uL15 from Staphylococcus saprophyticus subsp. saprophyticus (strain ATCC 15305 / DSM 20229 / NCIMB 8711 / NCTC 7292 / S-41).